The chain runs to 463 residues: RuvB-like 2 (463 aa).

Alanine 2 is subject to N-acetylalanine. Residue lysine 9 forms a Glycyl lysine isopeptide (Lys-Gly) (interchain with G-Cter in SUMO2) linkage. 77 to 84 is an ATP binding site; sequence GQPGTGKT. Serine 437 is modified (phosphoserine). Residues lysine 444 and lysine 456 each participate in a glycyl lysine isopeptide (Lys-Gly) (interchain with G-Cter in SUMO2) cross-link.

It belongs to the RuvB family. Forms homohexameric rings. Can form a dodecamer with RUVBL1 made of two stacked hexameric rings; however, even though RUVBL1 and RUVBL2 are present in equimolar ratio, the oligomeric status of each hexamer is not known. Oligomerization may regulate binding to nucleic acids and conversely, binding to nucleic acids may affect the dodecameric assembly. Interaction of the complex with DHX34 results in conformational changes of the N-terminus of the RUVBL2 subunits, resulting in loss of nucleotide binding ability and ATP hydrolysis of the complex. Interacts with the transcriptional activation domain of MYC. Interacts with ATF2. Component of the RNA polymerase II holoenzyme complex. May also act to bridge the LEF1/TCF1-CTNNB1 complex and TBP. Component of the NuA4 histone acetyltransferase complex which contains the catalytic subunit KAT5/TIP60 and the subunits EP400, TRRAP/PAF400, BRD8/SMAP, EPC1, DMAP1/DNMAP1, RUVBL1/TIP49, RUVBL2, ING3, actin, ACTL6A/BAF53A, MORF4L1/MRG15, MORF4L2/MRGX, MRGBP, YEATS4/GAS41, VPS72/YL1 and MEAF6. The NuA4 complex interacts with MYC and the adenovirus E1A protein. RUVBL2 interacts with EP400. Component of a NuA4-related complex which contains EP400, TRRAP/PAF400, SRCAP, BRD8/SMAP, EPC1, DMAP1/DNMAP1, RUVBL1/TIP49, RUVBL2, actin, ACTL6A/BAF53A, VPS72 and YEATS4/GAS41. Interacts with NPAT. Component of the chromatin-remodeling INO80 complex; specifically part of a complex module associated with the helicase ATP-binding and the helicase C-terminal domain of INO80. Component of some MLL1/MLL complex, at least composed of the core components KMT2A/MLL1, ASH2L, HCFC1/HCF1, WDR5 and RBBP5, as well as the facultative components BACC1, CHD8, E2F6, HSP70, INO80C, KANSL1, LAS1L, MAX, MCRS1, MGA, MYST1/MOF, PELP1, PHF20, PRP31, RING2, RUVB1/TIP49A, RUVB2/TIP49B, SENP3, TAF1, TAF4, TAF6, TAF7, TAF9 and TEX10. Interacts with IGHMBP2. Interacts with TELO2. Interacts with HINT1. Component of a SWR1-like complex. Component of the R2TP complex composed at least of RUVBL1, RUVBL2, RPAP3 and PIHD1. Component of the PAQosome complex which is responsible for the biogenesis of several protein complexes and which consists of R2TP complex members RUVBL1, RUVBL2, RPAP3 and PIH1D1, URI complex members PFDN2, PFDN6, PDRG1, UXT and URI1 as well as ASDURF, POLR2E and DNAAF10/WDR92. Interacts with ITFG1. Interacts with ZMYND10. Interacts with WAC; WAC positively regulates MTOR activity by promoting the assembly of the TTT complex composed of TELO2, TTI1 and TTI2 and the RUVBL complex composed of RUVBL1 and RUVBL2 into the TTT-RUVBL complex which leads to the dimerization of the mTORC1 complex and its subsequent activation. Forms a complex with APPL1 and APPL2. Interacts with ZNHIT2 (via HIT-type zinc finger) in the presence of ATP or ADP; shows a stronger interaction in the presence of ADP. The RUVBL1/RUVBL2 complex interacts with ZNHIT1 (via HIT-type zinc finger), ZNHIT3 (via HIT-type zinc finger), ZNHIT6 (via HIT-type zinc finger) and DDX59/ZNHIT5 (via HIT-type zinc finger) in the presence of ADP. Interacts with NOPCHAP1; the interaction is direct and disrupted upon ATP binding. Interacts with SMG1.

It localises to the nucleus matrix. Its subcellular location is the nucleus. It is found in the nucleoplasm. The protein localises to the cytoplasm. The protein resides in the membrane. It localises to the dynein axonemal particle. The catalysed reaction is ATP + H2O = ADP + phosphate + H(+). Functionally, possesses single-stranded DNA-stimulated ATPase and ATP-dependent DNA helicase (5' to 3') activity; hexamerization is thought to be critical for ATP hydrolysis and adjacent subunits in the ring-like structure contribute to the ATPase activity. Component of the NuA4 histone acetyltransferase complex which is involved in transcriptional activation of select genes principally by acetylation of nucleosomal histones H4 and H2A. This modification may both alter nucleosome-DNA interactions and promote interaction of the modified histones with other proteins which positively regulate transcription. This complex may be required for the activation of transcriptional programs associated with oncogene and proto-oncogene mediated growth induction, tumor suppressor mediated growth arrest and replicative senescence, apoptosis, and DNA repair. The NuA4 complex ATPase and helicase activities seem to be, at least in part, contributed by the association of RUVBL1 and RUVBL2 with EP400. NuA4 may also play a direct role in DNA repair when recruited to sites of DNA damage. Component of a SWR1-like complex that specifically mediates the removal of histone H2A.Z/H2AZ1 from the nucleosome. Proposed core component of the chromatin remodeling INO80 complex which exhibits DNA- and nucleosome-activated ATPase activity and catalyzes ATP-dependent nucleosome sliding. Plays an essential role in oncogenic transformation by MYC and also modulates transcriptional activation by the LEF1/TCF1-CTNNB1 complex. May also inhibit the transcriptional activity of ATF2. Involved in the endoplasmic reticulum (ER)-associated degradation (ERAD) pathway where it negatively regulates expression of ER stress response genes. May play a role in regulating the composition of the U5 snRNP complex. In Bos taurus (Bovine), this protein is RuvB-like 2 (RUVBL2).